A 365-amino-acid polypeptide reads, in one-letter code: Guanine nucleotide-binding protein alpha-6 subunit (365 aa).

Gly-2 is lipidated: N-myristoyl glycine. A G-alpha domain is found at 42–364; it reads NRFKILLLGT…NENLRSAGLH (323 aa). Residues 45–58 form a G1 motif region; sequence KILLLGTAESGKST. Residues 50-57, 187-193, 212-216, 281-284, and Ala-336 contribute to the GTP site; these read GTAESGKS, VHCRIST, DVGGQ, and NKYD. Mg(2+) is bound by residues Ser-57 and Thr-193. A G2 motif region spans residues 185 to 193; it reads DIVHCRIST. The segment at 208 to 217 is G3 motif; that stretch reads FKMVDVGGQR. The interval 277–284 is G4 motif; sequence VLFLNKYD. The G5 motif stretch occupies residues 334-339; that stretch reads TTATDT.

It belongs to the G-alpha family. In terms of assembly, g proteins are composed of 3 units; alpha, beta and gamma. The alpha chain contains the guanine nucleotide binding site.

Guanine nucleotide-binding proteins (G proteins) are involved as modulators or transducers in various transmembrane signaling systems. The polypeptide is Guanine nucleotide-binding protein alpha-6 subunit (gpa-6) (Caenorhabditis briggsae).